Consider the following 530-residue polypeptide: Histone-arginine methyltransferase CARMER (530 aa).

Positions 141–450 constitute an SAM-dependent MTase PRMT-type domain; sequence ASQYFQFYGY…QSYDVTIDLH (310 aa). The S-adenosyl-L-methionine site is built by Gln-154, Arg-163, Gly-187, Glu-209, Glu-238, and Thr-266. Asymmetric dimethylarginine; by autocatalysis is present on Arg-501.

Belongs to the class I-like SAM-binding methyltransferase superfamily. Protein arginine N-methyltransferase family. In terms of assembly, homodimer. In terms of processing, the dimethylated protein is the major form.

It is found in the cytoplasm. The protein resides in the nucleus. The catalysed reaction is L-arginyl-[protein] + 2 S-adenosyl-L-methionine = N(omega),N(omega)-dimethyl-L-arginyl-[protein] + 2 S-adenosyl-L-homocysteine + 2 H(+). Methylates (mono- and asymmetric dimethylation) the guanidino nitrogens of arginyl residues in proteins. May methylate histone H3 at 'Arg-17' and activate transcription via chromatin remodeling. The sequence is that of Histone-arginine methyltransferase CARMER (Art4) from Drosophila sechellia (Fruit fly).